Here is a 607-residue protein sequence, read N- to C-terminus: Elongation factor 4 (607 aa).

The region spanning 11–193 (KKIRNFSIIA…QIVELVPPPT (183 aa)) is the tr-type G domain. GTP-binding positions include 23–28 (DHGKST) and 140–143 (NKID).

Belongs to the TRAFAC class translation factor GTPase superfamily. Classic translation factor GTPase family. LepA subfamily.

Its subcellular location is the cell membrane. The enzyme catalyses GTP + H2O = GDP + phosphate + H(+). Required for accurate and efficient protein synthesis under certain stress conditions. May act as a fidelity factor of the translation reaction, by catalyzing a one-codon backward translocation of tRNAs on improperly translocated ribosomes. Back-translocation proceeds from a post-translocation (POST) complex to a pre-translocation (PRE) complex, thus giving elongation factor G a second chance to translocate the tRNAs correctly. Binds to ribosomes in a GTP-dependent manner. This Exiguobacterium sp. (strain ATCC BAA-1283 / AT1b) protein is Elongation factor 4.